We begin with the raw amino-acid sequence, 114 residues long: T cell receptor beta variable 6-1 (114 aa).

A signal peptide spans 1–21 (MSIGLLCCVAFSLLWASPVNA). An Ig-like domain is found at 22-114 (GVTQTPKFQV…TSVYFCASSE (93 aa)). Cysteine 42 and cysteine 110 are oxidised to a cystine. Asparagine 84 is a glycosylation site (N-linked (GlcNAc...) asparagine).

Alpha-beta TR is a heterodimer composed of an alpha and beta chain; disulfide-linked. The alpha-beta TR is associated with the transmembrane signaling CD3 coreceptor proteins to form the TR-CD3 (TcR or TCR). The assembly of alpha-beta TR heterodimers with CD3 occurs in the endoplasmic reticulum where a single alpha-beta TR heterodimer associates with one CD3D-CD3E heterodimer, one CD3G-CD3E heterodimer and one CD247 homodimer forming a stable octameric structure. CD3D-CD3E and CD3G-CD3E heterodimers preferentially associate with TR alpha and TR beta chains, respectively. The association of the CD247 homodimer is the last step of TcR assembly in the endoplasmic reticulum and is required for transport to the cell surface.

It localises to the cell membrane. Its function is as follows. V region of the variable domain of T cell receptor (TR) beta chain that participates in the antigen recognition. Alpha-beta T cell receptors are antigen specific receptors which are essential to the immune response and are present on the cell surface of T lymphocytes. Recognize peptide-major histocompatibility (MH) (pMH) complexes that are displayed by antigen presenting cells (APC), a prerequisite for efficient T cell adaptive immunity against pathogens. Binding of alpha-beta TR to pMH complex initiates TR-CD3 clustering on the cell surface and intracellular activation of LCK that phosphorylates the ITAM motifs of CD3G, CD3D, CD3E and CD247 enabling the recruitment of ZAP70. In turn ZAP70 phosphorylates LAT, which recruits numerous signaling molecules to form the LAT signalosome. The LAT signalosome propagates signal branching to three major signaling pathways, the calcium, the mitogen-activated protein kinase (MAPK) kinase and the nuclear factor NF-kappa-B (NF-kB) pathways, leading to the mobilization of transcription factors that are critical for gene expression and essential for T cell growth and differentiation. The T cell repertoire is generated in the thymus, by V-(D)-J rearrangement. This repertoire is then shaped by intrathymic selection events to generate a peripheral T cell pool of self-MH restricted, non-autoaggressive T cells. Post-thymic interaction of alpha-beta TR with the pMH complexes shapes TR structural and functional avidity. The protein is T cell receptor beta variable 6-1 of Homo sapiens (Human).